Here is a 304-residue protein sequence, read N- to C-terminus: Oxidoreductase calM (304 aa).

Residues Ile26, Thr45, Asp68, and Asn98 each contribute to the NADP(+) site. Ser152 serves as the catalytic Proton donor. The NADP(+) site is built by Tyr166, Lys170, Val200, and Thr202. Residue Tyr166 is the Proton acceptor of the active site. Lys170 functions as the Lowers pKa of active site Tyr in the catalytic mechanism.

It belongs to the short-chain dehydrogenases/reductases (SDR) family.

Its pathway is secondary metabolite biosynthesis. In terms of biological role, oxidoreductase; part of the gene cluster that mediates the biosynthesis of calbistrin A and related compounds. Calbistrin A is a secondary metabolite with an interesting structure that was recently found to have bioactivity against leukemia cells. It consists of two polyketides linked by an ester bond: a bicyclic decalin containing polyketide and a linear 12 carbon dioic acid structure. The polyketide synthase calA is probably responsible for forming the decalin moiety. Because calA lacks a designated enoylreductase (ER) domain, the required activity is provided by the trans-enoyl reductase calK. Following release from the PKS, calF then probably catalyzes the oxidation and the subsequent Diels Alder cycloisomerization that lead to the formation of the decalin moiety. The decalin polyketide backbone includes two C-methyl groups, at C7 and C11 in backbone, of which the C7 position is probably methylated by the methyltransferase domain of calA. A candidate for adding the methyl group at C11, if not done by CalA, is the cluster methyltransferase calH. Several additional tailoring enzymes within the cluster could be involved in the modification of the decalin polyketide product. Those include the 3 cytochrome P450 monooxygenases CalE, CalG and CalL, of which one might be responsible for the introduction of the extra hydroxyl group attached to the backbone of the decalin moiety, at position C9 in the backbone, that allows for attachment of the linear moiety. One tailoring enzyme activity that is expected to be involved in biosynthesis of calbistrin is an acyltransferase for connecting the two polyketide synthase products, and which could be performed by the cluster acyltransferase calJ. The enzyme responsible for the biosynthesis of the linear moiety, probably a second PKS, has not been identified yet. The chain is Oxidoreductase calM from Penicillium decumbens.